The following is a 1394-amino-acid chain: Leucine-rich PPR motif-containing protein, mitochondrial (1394 aa).

The N-terminal 59 residues, 1–59, are a transit peptide targeting the mitochondrion; sequence MAALLRSARWLLRAGAAPRLPLSLRLLPGGPGRLHAASYLPAARAGPVAGGLLSPARLY. 8 PPR repeats span residues 126 to 160, 161 to 195, 196 to 230, 231 to 265, 266 to 300, 301 to 335, 403 to 437, and 438 to 472; these read LLRS…GAVY, DVSH…NIQP, NRVT…DLPV, TEAV…GIEP, GPDT…ELHL, MDRD…RRYI, HSFP…GFPI, and RPHY…GVHP. N6-acetyllysine is present on residues lysine 155, lysine 187, and lysine 226. An N6-acetyllysine modification is found at lysine 292. 2 positions are modified to N6-acetyllysine: lysine 463 and lysine 613. 6 PPR repeats span residues 678-709, 710-746, 747-784, 785-820, 821-856, and 954-988; these read IRDV…ESDM, VTGG…SAVL, DTGK…IKDT, TALS…LAEP, STNI…KVLP, and RDQM…NVIP. Positions 712-1067 are interaction with BECN1 and Aedes aegypti venom allergen-1; that stretch reads GGYAALINLC…AKEQNIVFNA (356 aa). 2 positions are modified to N6-acetyllysine: lysine 726 and lysine 750. 3 positions are modified to phosphoserine: serine 1026, serine 1027, and serine 1029. PPR repeat units follow at residues 1031–1065, 1066–1102, 1103–1137, 1138–1175, 1176–1210, and 1317–1351; these read TEPD…NIVF, NAET…GFTL, NDAA…QQTP, SRLA…IGLS, KMVF…ENKV, and KEEA…NTKL. Residues 1121-1394 form an RNA-binding region; that stretch reads KEAVTTLKTV…QLRKLRENSS (274 aa). Threonine 1136 carries the phosphothreonine modification. Phosphoserine is present on serine 1138.

In terms of assembly, component of mRNP complexes associated with HNRPA1. Component of the complex, at least composed of LRPPRC, BECN1 and BCL2; the interactions prevent BECN1 from forming an autophagy-inducing complex with PIK3C3. Interacts with CECR2, HEBP2, MAP1S and UXT. Interacts with PPARGC1A. Interacts with FOXO1. Interacts (via N-terminus) with EIF4E; the interaction promotes association of EIF4E with 4ESE-containing mRNAs. Interacts with exportin XPO1/CRM1; interacts both alone and in complex with EIF4E and 4ESE-containing mRNAs to form an EIF4E-dependent mRNA export complex. Interacts with importin IPO8; the interaction occurs when LRPPRC is in its RNA-free form and returns LRPPRC to the nucleus for further export rounds. Interacts with BECN1. Interacts with Aedes aegypti venom allergen-1; the interaction interrupts BECN1 and LRPPRC association. Expressed ubiquitously. Expression is highest in heart, skeletal muscle, kidney and liver, intermediate in brain, non-mucosal colon, spleen and placenta, and lowest in small intestine, thymus, lung and peripheral blood leukocytes.

The protein resides in the mitochondrion. It localises to the nucleus. Its subcellular location is the nucleoplasm. It is found in the nucleus inner membrane. The protein localises to the nucleus outer membrane. Functionally, may play a role in RNA metabolism in both nuclei and mitochondria. In the nucleus binds to HNRPA1-associated poly(A) mRNAs and is part of nmRNP complexes at late stages of mRNA maturation which are possibly associated with nuclear mRNA export. Positively modulates nuclear export of mRNAs containing the EIF4E sensitivity element (4ESE) by binding simultaneously to both EIF4E and the 4ESE and acting as a platform for assembly for the RNA export complex. Also binds to exportin XPO1/CRM1 to engage the nuclear pore and traffic the bound mRNAs to the cytoplasm. May bind mature mRNA in the nucleus outer membrane. In mitochondria binds to poly(A) mRNA. Plays a role in translation or stability of mitochondrially encoded cytochrome c oxidase (COX) subunits. May be involved in transcription regulation. Cooperates with PPARGC1A to regulate certain mitochondrially encoded genes and gluconeogenic genes and may regulate docking of PPARGC1A to transcription factors. Seems to be involved in the transcription regulation of the multidrug-related genes MDR1 and MVP. Part of a nuclear factor that binds to the invMED1 element of MDR1 and MVP gene promoters. Binds single-stranded DNA. Required for maintaining mitochondrial potential. Suppresses the initiation of basal levels of autophagy and mitophagy by sustaining BCL2 levels. The protein is Leucine-rich PPR motif-containing protein, mitochondrial (LRPPRC) of Homo sapiens (Human).